The following is a 316-amino-acid chain: Aprataxin (316 aa).

The FHA-like domain occupies His-1–Val-38. Positions Lys-104–Ser-142 are disordered. Over residues Asp-110–Gly-130 the composition is skewed to polar residues. The region spanning Ser-142–Leu-247 is the HIT domain. Interaction with DNA substrate regions lie at residues Asp-167–Lys-171 and Ser-229–Met-230. The Histidine triad motif motif lies at Gln-232–His-236. His-234 acts as the Tele-AMP-histidine intermediate in catalysis. The segment at Leu-291 to His-313 adopts a C2H2-type zinc-finger fold.

The protein localises to the nucleus. It localises to the nucleoplasm. The protein resides in the nucleolus. The enzyme catalyses a 5'-end adenosine-5'-diphospho-5'-2'-deoxyribonucleoside-DNA + H2O = a 5'-end 5'-phospho-2'-deoxyribonucleoside-DNA + AMP + 2 H(+). It catalyses the reaction a 5'-end adenosine-5'-diphospho-5'-ribonucleoside-2'-deoxyribonucleotide-DNA + H2O = a 5'-end 5'-phospho-ribonucleoside-2'-deoxyribonucleotide-DNA + AMP + 2 H(+). It carries out the reaction a 3'-end 2'-deoxyribonucleotide-3'-diphospho-5'-guanosine-DNA + H2O = a 3'-end 2'-deoxyribonucleotide 3'-phosphate-DNA + GMP + 2 H(+). DNA-binding protein involved in single-strand DNA break repair, double-strand DNA break repair and base excision repair. Resolves abortive DNA ligation intermediates formed either at base excision sites, or when DNA ligases attempt to repair non-ligatable breaks induced by reactive oxygen species. Catalyzes the release of adenylate groups covalently linked to 5'-phosphate termini, resulting in the production of 5'-phosphate termini that can be efficiently rejoined. Also able to hydrolyze adenosine 5'-monophosphoramidate (AMP-NH(2)) and diadenosine tetraphosphate (AppppA), but with lower catalytic activity. Likewise, catalyzes the release of 3'-linked guanosine (DNAppG) and inosine (DNAppI) from DNA, but has higher specific activity with 5'-linked adenosine (AppDNA). In Gallus gallus (Chicken), this protein is Aprataxin (APTX).